The primary structure comprises 109 residues: Hainantoxin-XVIII-5 (109 aa).

Residues 1–18 (MKLSIIIIATSLVIAVVA) form the signal peptide. A propeptide spanning residues 19–46 (FPSKDSKAIENDKTEQRMEIVVQETARA) is cleaved from the precursor. 4 disulfides stabilise this stretch: Cys47–Cys62, Cys55–Cys68, Cys59–Cys108, and Cys61–Cys81.

Belongs to the neurotoxin 25 family. F7 subfamily. As to expression, expressed by the venom gland.

The protein localises to the secreted. Putative ion channel inhibitor. The chain is Hainantoxin-XVIII-5 from Cyriopagopus hainanus (Chinese bird spider).